Reading from the N-terminus, the 424-residue chain is Arogenate dehydratase 3, chloroplastic (424 aa).

A chloroplast-targeting transit peptide spans 1–24 (MRTLLPSHTPATVTTAARRRHVIH). The segment covering 57–71 (EQSESLSSNSNGSSS) has biased composition (low complexity). The segment at 57–77 (EQSESLSSNSNGSSSYHVSAV) is disordered. Residues 122–299 (RVAYQGVPGA…NVTRFVMLAR (178 aa)) form the Prephenate dehydratase domain. The ACT domain occupies 313–404 (SIVFAHEKGT…SFLRVLGSYP (92 aa)).

May interact with GPA1. In terms of tissue distribution, expressed in roots, leaves, stems, flowers and siliques.

The protein localises to the plastid. The protein resides in the chloroplast stroma. The catalysed reaction is L-arogenate + H(+) = L-phenylalanine + CO2 + H2O. It participates in amino-acid biosynthesis; L-phenylalanine biosynthesis; L-phenylalanine from L-arogenate: step 1/1. Converts the prephenate produced from the shikimate-chorismate pathway into phenylalanine. Together with GCR1 and GPA1, required for blue light-mediated synthesis of phenylpyruvate and subsequently of phenylalanine (Phe), in etiolated seedlings. The protein is Arogenate dehydratase 3, chloroplastic of Arabidopsis thaliana (Mouse-ear cress).